Reading from the N-terminus, the 248-residue chain is Trypsin I-P1 (248 aa).

A signal peptide spans 1–15 (MKFLVLVAFVGVTVA). The propeptide at 16–25 (FPISDEDDDK) is activation peptide. The 221-residue stretch at 26 to 246 (IVGGYSCARS…YVSWIKTTMS (221 aa)) folds into the Peptidase S1 domain. Cystine bridges form between C32–C162, C50–C66, C134–C235, C141–C208, C173–C187, and C198–C222. The Charge relay system role is filled by H65. Positions 77, 79, and 87 each coordinate Ca(2+). Catalysis depends on D109, which acts as the Charge relay system. Catalysis depends on S202, which acts as the Charge relay system.

This sequence belongs to the peptidase S1 family. The cofactor is Ca(2+). High levels are seen in the pancreas while lower levels are found in the liver, spleen and thymus.

Its subcellular location is the secreted. It localises to the extracellular space. The enzyme catalyses Preferential cleavage: Arg-|-Xaa, Lys-|-Xaa.. The chain is Trypsin I-P1 from Gallus gallus (Chicken).